A 455-amino-acid chain; its full sequence is Homogentisate 1,2-dioxygenase (455 aa).

The active-site Proton acceptor is the His308. Fe cation is bound by residues His351 and Glu357. Homogentisate-binding residues include Tyr366 and His387. Position 387 (His387) interacts with Fe cation.

Belongs to the homogentisate dioxygenase family. In terms of assembly, hexamer; dimer of trimers. It depends on Fe cation as a cofactor.

It catalyses the reaction homogentisate + O2 = 4-maleylacetoacetate + H(+). Its pathway is amino-acid degradation; L-phenylalanine degradation; acetoacetate and fumarate from L-phenylalanine: step 4/6. Involved in the catabolism of homogentisate (2,5-dihydroxyphenylacetate or 2,5-OH-PhAc), a central intermediate in the degradation of phenylalanine and tyrosine. Catalyzes the oxidative ring cleavage of the aromatic ring of homogentisate to yield maleylacetoacetate. The chain is Homogentisate 1,2-dioxygenase from Xanthomonas campestris pv. campestris (strain 8004).